The following is a 445-amino-acid chain: Phosphoglucosamine mutase (445 aa).

Serine 102 functions as the Phosphoserine intermediate in the catalytic mechanism. Mg(2+)-binding residues include serine 102, aspartate 241, aspartate 243, and aspartate 245. Residue serine 102 is modified to Phosphoserine.

The protein belongs to the phosphohexose mutase family. Requires Mg(2+) as cofactor. In terms of processing, activated by phosphorylation.

The catalysed reaction is alpha-D-glucosamine 1-phosphate = D-glucosamine 6-phosphate. In terms of biological role, catalyzes the conversion of glucosamine-6-phosphate to glucosamine-1-phosphate. The polypeptide is Phosphoglucosamine mutase (Pectobacterium atrosepticum (strain SCRI 1043 / ATCC BAA-672) (Erwinia carotovora subsp. atroseptica)).